Here is a 102-residue protein sequence, read N- to C-terminus: NADH-quinone oxidoreductase subunit K (102 aa).

3 consecutive transmembrane segments (helical) span residues 6–26, 30–50, and 62–82; these read LEHG…GLMV, ILFV…AFVV, and VMFI…LAIL.

This sequence belongs to the complex I subunit 4L family. In terms of assembly, NDH-1 is composed of 13 different subunits. Subunits NuoA, H, J, K, L, M, N constitute the membrane sector of the complex.

Its subcellular location is the cell inner membrane. The enzyme catalyses a quinone + NADH + 5 H(+)(in) = a quinol + NAD(+) + 4 H(+)(out). Its function is as follows. NDH-1 shuttles electrons from NADH, via FMN and iron-sulfur (Fe-S) centers, to quinones in the respiratory chain. The immediate electron acceptor for the enzyme in this species is believed to be ubiquinone. Couples the redox reaction to proton translocation (for every two electrons transferred, four hydrogen ions are translocated across the cytoplasmic membrane), and thus conserves the redox energy in a proton gradient. This Pseudomonas syringae pv. tomato (strain ATCC BAA-871 / DC3000) protein is NADH-quinone oxidoreductase subunit K.